Reading from the N-terminus, the 390-residue chain is RNA binding protein fox-1 homolog 2 (390 aa).

A disordered region spans residues 1–127 (MQNEPLTPGY…STPKRLHVSN (127 aa)). 2 stretches are compositionally biased toward polar residues: residues 18–28 (SQGNQEPTTTP) and 65–95 (GEHNLTLYGSTQAHGEQSSNSPSTQNGSLTT). Phosphothreonine is present on His-67. Residues 97 to 117 (GGAQTDGQQSQTQSSENSESK) show a composition bias toward low complexity. The region spanning 121-197 (KRLHVSNIPF…RKIEVNNATA (77 aa)) is the RRM domain. Residues Gly-249, Gly-267, Phe-268, Ala-277, and Arg-281 each carry the omega-N-methylarginine modification. 2 positions are modified to asymmetric dimethylarginine: Arg-297 and Arg-329. Asymmetric dimethylarginine; alternate is present on residues Arg-381 and Arg-386. 2 positions are modified to omega-N-methylarginine; alternate: Arg-381 and Arg-386.

In terms of assembly, interacts with ER-alpha N-terminal activation domain. Interacts with RBPMS; the interaction allows cooperative assembly of stable cell-specific alternative splicing regulatory complexes.

It localises to the nucleus. The protein localises to the cytoplasm. Its function is as follows. RNA-binding protein that regulates alternative splicing events by binding to 5'-UGCAUGU-3' elements. Prevents binding of U2AF2 to the 3'-splice site. Regulates alternative splicing of tissue-specific exons and of differentially spliced exons during erythropoiesis. RNA-binding protein that seems to act as a coregulatory factor of ER-alpha. Together with RNA binding proteins RBPMS and MBNL1/2, activates vascular smooth muscle cells alternative splicing events. The chain is RNA binding protein fox-1 homolog 2 (RBFOX2) from Homo sapiens (Human).